The following is a 203-amino-acid chain: Cytochrome c biogenesis CcmF N-terminal-like mitochondrial protein 2 (203 aa).

The next 2 helical transmembrane spans lie at 44–64 (IWIL…SWWA) and 143–163 (IFLW…FYQM).

This sequence belongs to the CcmF/CycK/Ccl1/NrfE/CcsA family. As to quaternary structure, interacts with CCMFC, CCMFN1, CCMH and CYTC-1.

Its subcellular location is the mitochondrion inner membrane. Functionally, forms a complex with CCMFC, CCMFN1 and CCMH that performs the assembly of heme with c-type apocytochromes in mitochondria. This chain is Cytochrome c biogenesis CcmF N-terminal-like mitochondrial protein 2, found in Arabidopsis thaliana (Mouse-ear cress).